Here is a 168-residue protein sequence, read N- to C-terminus: Endoribonuclease YbeY (168 aa).

His-127, His-131, and His-137 together coordinate Zn(2+).

It belongs to the endoribonuclease YbeY family. It depends on Zn(2+) as a cofactor.

Its subcellular location is the cytoplasm. Single strand-specific metallo-endoribonuclease involved in late-stage 70S ribosome quality control and in maturation of the 3' terminus of the 16S rRNA. The chain is Endoribonuclease YbeY from Chromobacterium violaceum (strain ATCC 12472 / DSM 30191 / JCM 1249 / CCUG 213 / NBRC 12614 / NCIMB 9131 / NCTC 9757 / MK).